A 377-amino-acid polypeptide reads, in one-letter code: 3-dehydroquinate synthase (377 aa).

Residues 115–119 (GVIGD), 139–140 (TS), K152, and K161 contribute to the NAD(+) site. E194, H256, and H275 together coordinate Zn(2+).

Belongs to the sugar phosphate cyclases superfamily. Dehydroquinate synthase family. The cofactor is Co(2+). Requires Zn(2+) as cofactor. It depends on NAD(+) as a cofactor.

It localises to the cytoplasm. It carries out the reaction 7-phospho-2-dehydro-3-deoxy-D-arabino-heptonate = 3-dehydroquinate + phosphate. The protein operates within metabolic intermediate biosynthesis; chorismate biosynthesis; chorismate from D-erythrose 4-phosphate and phosphoenolpyruvate: step 2/7. Functionally, catalyzes the conversion of 3-deoxy-D-arabino-heptulosonate 7-phosphate (DAHP) to dehydroquinate (DHQ). The sequence is that of 3-dehydroquinate synthase from Rhizobium rhizogenes (strain K84 / ATCC BAA-868) (Agrobacterium radiobacter).